Here is a 224-residue protein sequence, read N- to C-terminus: Ribose-5-phosphate isomerase A (224 aa).

Substrate contacts are provided by residues 26 to 29 (TGST), 81 to 84 (DGAD), and 94 to 97 (KGGG). Glu103 (proton acceptor) is an active-site residue. Residue Lys121 coordinates substrate.

It belongs to the ribose 5-phosphate isomerase family. Homodimer.

It catalyses the reaction aldehydo-D-ribose 5-phosphate = D-ribulose 5-phosphate. It participates in carbohydrate degradation; pentose phosphate pathway; D-ribose 5-phosphate from D-ribulose 5-phosphate (non-oxidative stage): step 1/1. Functionally, catalyzes the reversible conversion of ribose-5-phosphate to ribulose 5-phosphate. This chain is Ribose-5-phosphate isomerase A, found in Listeria monocytogenes serovar 1/2a (strain ATCC BAA-679 / EGD-e).